Here is a 357-residue protein sequence, read N- to C-terminus: MKKTPLFEIHKELGARLIEFHGWSMPVQYTSIIEEHKAVRNQCGLFDVSHMGEILVEGPGALESLQKIVTNNVARLKKGQVLYTPMCKDDGGIIDDLLVYCLGQDKYLMVVNASNIEKDFNWVRDNSNQRTEVVNESDNYALLALQGPNSKKILEKVSSVNLDSLKFYNFTTGTLKGAEVLISRTGYTGELGYELYLSPDKAVEVWQALMEAGSDLGLIPAGLGARDTLRLEKGYCLYGNDIDENTHPLEAGLGWTVKFDKASFIGKRALLKYKEEGLSRKLVGFKLKGRGIPRHGYPIKDNGDQIGVVTSGSMSPTLSEGIGMGYVRYDKATPGESITIVVRNRAITGEVVKLPFI.

This sequence belongs to the GcvT family. As to quaternary structure, the glycine cleavage system is composed of four proteins: P, T, L and H.

The catalysed reaction is N(6)-[(R)-S(8)-aminomethyldihydrolipoyl]-L-lysyl-[protein] + (6S)-5,6,7,8-tetrahydrofolate = N(6)-[(R)-dihydrolipoyl]-L-lysyl-[protein] + (6R)-5,10-methylene-5,6,7,8-tetrahydrofolate + NH4(+). In terms of biological role, the glycine cleavage system catalyzes the degradation of glycine. This chain is Aminomethyltransferase, found in Halothermothrix orenii (strain H 168 / OCM 544 / DSM 9562).